The following is a 152-amino-acid chain: Large ribosomal subunit protein eL29 (152 aa).

Residues Met-1–Ser-26 show a composition bias toward basic residues. Positions Met-1–Leu-32 are disordered. The residue at position 5 (Lys-5) is an N6-methyllysine. At Ser-31 the chain carries Phosphoserine. Lys-33 carries the N6-acetyllysine modification. Residues Cys-119–Glu-152 form a disordered region. Residues Pro-121 to Glu-152 are compositionally biased toward low complexity.

Belongs to the eukaryotic ribosomal protein eL29 family. In terms of assembly, component of the large ribosomal subunit.

The protein resides in the cytoplasm. Component of the large ribosomal subunit. The ribosome is a large ribonucleoprotein complex responsible for the synthesis of proteins in the cell. The chain is Large ribosomal subunit protein eL29 (RPL29) from Bos taurus (Bovine).